The following is a 542-amino-acid chain: CTP synthase (542 aa).

Residues 1–269 (MQTKYIFITG…DALICELLHL (269 aa)) form an amidoligase domain region. A CTP-binding site is contributed by Ser14. Residue Ser14 participates in UTP binding. Residues 15–20 (SLGKGL) and Asp72 contribute to the ATP site. Mg(2+) is bound by residues Asp72 and Glu143. Residues 150 to 152 (DIE), 189 to 194 (KTKPSQ), and Lys225 contribute to the CTP site. Residues 189–194 (KTKPSQ) and Lys225 contribute to the UTP site. An ATP-binding site is contributed by 241–243 (KDV). The 238-residue stretch at 301–538 (YVQHQDAYKS…IQAMIIYHKS (238 aa)) folds into the Glutamine amidotransferase type-1 domain. Gly358 is a binding site for L-glutamine. Cys385 acts as the Nucleophile; for glutamine hydrolysis in catalysis. L-glutamine-binding positions include 386 to 389 (LGMQ), Glu409, and Arg466. Residues His511 and Glu513 contribute to the active site.

This sequence belongs to the CTP synthase family. Homotetramer.

The catalysed reaction is UTP + L-glutamine + ATP + H2O = CTP + L-glutamate + ADP + phosphate + 2 H(+). The enzyme catalyses L-glutamine + H2O = L-glutamate + NH4(+). It carries out the reaction UTP + NH4(+) + ATP = CTP + ADP + phosphate + 2 H(+). Its pathway is pyrimidine metabolism; CTP biosynthesis via de novo pathway; CTP from UDP: step 2/2. With respect to regulation, allosterically activated by GTP, when glutamine is the substrate; GTP has no effect on the reaction when ammonia is the substrate. The allosteric effector GTP functions by stabilizing the protein conformation that binds the tetrahedral intermediate(s) formed during glutamine hydrolysis. Inhibited by the product CTP, via allosteric rather than competitive inhibition. In terms of biological role, catalyzes the ATP-dependent amination of UTP to CTP with either L-glutamine or ammonia as the source of nitrogen. Regulates intracellular CTP levels through interactions with the four ribonucleotide triphosphates. The sequence is that of CTP synthase from Protochlamydia amoebophila (strain UWE25).